A 333-amino-acid chain; its full sequence is Protein XAP5 CIRCADIAN TIMEKEEPER (333 aa).

Coiled coils occupy residues 12-43 and 70-116; these read AQDAVKIRRLEKQREAERRKIEELKNKSSDGQ and TREQ…VRGD. Residues 89–98 are compositionally biased toward basic and acidic residues; sequence EKEKLQKLQQ. The interval 89-171 is disordered; the sequence is EKEKLQKLQQ…REREAEEQAE (83 aa). A compositionally biased stretch (acidic residues) spans 123–136; the sequence is DEIENGSDEDEFEN. The segment covering 160-171 has biased composition (basic and acidic residues); the sequence is PDREREAEEQAE.

Belongs to the FAM50 family.

The protein resides in the nucleus. Its function is as follows. Involved in light regulation of the circadian clock and photomorphogenesis. The sequence is that of Protein XAP5 CIRCADIAN TIMEKEEPER (XCT) from Oryza sativa subsp. indica (Rice).